Consider the following 91-residue polypeptide: Small ribosomal subunit protein bS18 (91 aa).

Residues 1–21 form a disordered region; sequence MSDERAPQRSTGPRKKRPFQR. The span at 12–21 shows a compositional bias: basic residues; that stretch reads GPRKKRPFQR.

This sequence belongs to the bacterial ribosomal protein bS18 family. In terms of assembly, part of the 30S ribosomal subunit. Forms a tight heterodimer with protein bS6.

Its function is as follows. Binds as a heterodimer with protein bS6 to the central domain of the 16S rRNA, where it helps stabilize the platform of the 30S subunit. This chain is Small ribosomal subunit protein bS18, found in Geotalea daltonii (strain DSM 22248 / JCM 15807 / FRC-32) (Geobacter daltonii).